The sequence spans 261 residues: Eukaryotic translation initiation factor 3 subunit G (261 aa).

Positions 156–180 (QDADSKNALGLRGDGRQMERNRSDE) are disordered. Over residues 168–180 (GDGRQMERNRSDE) the composition is skewed to basic and acidic residues. Residues 181 to 259 (NTCRVTNLPQ…MVLKVEWTRP (79 aa)) form the RRM domain.

The protein belongs to the eIF-3 subunit G family. In terms of assembly, component of the eukaryotic translation initiation factor 3 (eIF-3) complex.

It localises to the cytoplasm. Its function is as follows. RNA-binding component of the eukaryotic translation initiation factor 3 (eIF-3) complex, which is involved in protein synthesis of a specialized repertoire of mRNAs and, together with other initiation factors, stimulates binding of mRNA and methionyl-tRNAi to the 40S ribosome. The eIF-3 complex specifically targets and initiates translation of a subset of mRNAs involved in cell proliferation. This subunit can bind 18S rRNA. In Caenorhabditis briggsae, this protein is Eukaryotic translation initiation factor 3 subunit G.